The primary structure comprises 246 residues: Probable transcriptional regulatory protein CLJ_B3338 (246 aa).

This sequence belongs to the TACO1 family.

The protein resides in the cytoplasm. In Clostridium botulinum (strain 657 / Type Ba4), this protein is Probable transcriptional regulatory protein CLJ_B3338.